Consider the following 95-residue polypeptide: MKNEGEKEGLNISRCRVCKPGSTLINKTGGWRNFRPVYIYEKCTKCGICHIVCPDMSVKPRENGFFEYDYDYCKGCGICANECPADAIEMILEEK.

4Fe-4S ferredoxin-type domains lie at 34–63 (FRPV…PREN) and 64–93 (GFFE…MILE). Positions 43, 46, 49, 53, 73, 76, 79, and 83 each coordinate [4Fe-4S] cluster.

Heterotetramer of one alpha, one beta, one delta and one gamma chain. The cofactor is [4Fe-4S] cluster.

In Methanosarcina barkeri (strain Fusaro / DSM 804), this protein is Pyruvate synthase subunit PorD (porD).